Consider the following 892-residue polypeptide: Isoleucine--tRNA ligase (892 aa).

The short motif at 60–70 is the 'HIGH' region element; sequence PYANGSIHIGH. Glu-552 provides a ligand contact to L-isoleucyl-5'-AMP. The 'KMSKS' region motif lies at 593 to 597; sequence KMSKS. An ATP-binding site is contributed by Lys-596. Residues Cys-862, Cys-865, Cys-879, and Cys-882 each coordinate Zn(2+).

Belongs to the class-I aminoacyl-tRNA synthetase family. IleS type 1 subfamily. As to quaternary structure, monomer. The cofactor is Zn(2+).

Its subcellular location is the cytoplasm. It carries out the reaction tRNA(Ile) + L-isoleucine + ATP = L-isoleucyl-tRNA(Ile) + AMP + diphosphate. In terms of biological role, catalyzes the attachment of isoleucine to tRNA(Ile). As IleRS can inadvertently accommodate and process structurally similar amino acids such as valine, to avoid such errors it has two additional distinct tRNA(Ile)-dependent editing activities. One activity is designated as 'pretransfer' editing and involves the hydrolysis of activated Val-AMP. The other activity is designated 'posttransfer' editing and involves deacylation of mischarged Val-tRNA(Ile). The sequence is that of Isoleucine--tRNA ligase from Mycoplasmopsis agalactiae (strain NCTC 10123 / CIP 59.7 / PG2) (Mycoplasma agalactiae).